The primary structure comprises 500 residues: Protein gar2 (500 aa).

2 stretches are compositionally biased toward basic and acidic residues: residues 1-41 and 59-68; these read MAKK…KEIA and KRASSPEPSK. Residues 1–262 form a disordered region; sequence MAKKDKTSVK…TKPSQDSNET (262 aa). Positions 69 to 78 are enriched in basic residues; sequence KSVKKQKKSK. Over residues 90–120 the composition is skewed to low complexity; it reads ESSSSESESSSSESESSSSESESSSSESSSS. The segment covering 126–137 has biased composition (basic and acidic residues); it reads VIVKTEEKKESS. S143, S144, and S146 each carry phosphoserine. The span at 152-163 shows a compositional bias: basic and acidic residues; sequence AVVKIEEKKESS. The span at 164–182 shows a compositional bias: low complexity; sequence SDSSSESSSSESESESSSS. Over residues 191–201 the composition is skewed to basic and acidic residues; that stretch reads VEKTEEKKEGS. Residues 202 to 218 are compositionally biased toward low complexity; the sequence is SESSSDSESSSDSSSES. The span at 219 to 233 shows a compositional bias: acidic residues; that stretch reads GDSDSSSDSESESSS. Residues 234–250 are compositionally biased toward basic and acidic residues; the sequence is EDEKKRKAEPASEERPA. RRM domains are found at residues 263-341 and 366-443; these read CTVF…LSNP and DTVF…FSTP. Residues 441 to 500 form a disordered region; the sequence is STPRTGGGSRGGRGGFGGRGGFGGRGGFGGGRGRGRGGARSGNPNRGSVAPFSGNKVTFD. Gly residues predominate over residues 445 to 480; that stretch reads TGGGSRGGRGGFGGRGGFGGRGGFGGGRGRGRGGAR.

This sequence belongs to the RRM GAR family.

The protein localises to the nucleus. The protein resides in the nucleolus. Its function is as follows. Helps the assembly of pre-ribosomal particles containing 18S rRNA. The polypeptide is Protein gar2 (gar2) (Schizosaccharomyces pombe (strain 972 / ATCC 24843) (Fission yeast)).